A 373-amino-acid polypeptide reads, in one-letter code: P2Y purinoceptor 2 (373 aa).

Topologically, residues 1 to 32 are extracellular; the sequence is MAADLEPWNSTINGTWEGDELGYKCRFNEDFK. N9 and N13 each carry an N-linked (GlcNAc...) asparagine glycan. Residues 33–59 form a helical membrane-spanning segment; the sequence is YVLLPVSYGVVCVLGLCLNVVALYIFL. The Cytoplasmic portion of the chain corresponds to 60-70; that stretch reads CRLKTWNASTT. A helical membrane pass occupies residues 71 to 93; it reads YMFHLAVSDSLYAASLPLLVYYY. At 94–110 the chain is on the extracellular side; that stretch reads ARGDHWPFSTVLCKLVR. An intrachain disulfide couples C106 to C183. Residues 111–129 form a helical membrane-spanning segment; sequence FLFYTNLYCSILFLTCISV. Topologically, residues 130 to 152 are cytoplasmic; it reads HRCLGVLRPLHSLRWGRARYARR. A helical transmembrane segment spans residues 153–172; that stretch reads VAAVVWVLVLACQAPVLYFV. Residues 173–194 are Extracellular-facing; that stretch reads TTSVRGTRITCHDTSARELFSH. Residues 195-220 form a helical membrane-spanning segment; the sequence is FVAYSSVMLGLLFAVPFSVILVCYVL. The Cytoplasmic portion of the chain corresponds to 221–246; it reads MARRLLKPAYGTTGGLPRAKRKSVRT. A helical membrane pass occupies residues 247-269; the sequence is IALVLAVFALCFLPFHVTRTLYY. Residues 270-287 are Extracellular-facing; sequence SFRSLDLSCHTLNAINMA. Residues 288-309 form a helical membrane-spanning segment; the sequence is YKITRPLASANSCLDPVLYFLA. Residues 310–373 are Cytoplasmic-facing; it reads GQRLVRFARD…AGSETKDIRL (64 aa). The segment at 318 to 373 is disordered; the sequence is RDAKPPTEPTPSPQARRKLGLHRPNRTVRKDLSVSSDDSRRTESTPAGSETKDIRL. Residues 332–344 show a composition bias toward basic residues; that stretch reads ARRKLGLHRPNRT. Basic and acidic residues predominate over residues 345–360; sequence VRKDLSVSSDDSRRTE.

The protein belongs to the G-protein coupled receptor 1 family. Spleen, testis, kidney, liver, lung, heart and brain.

Its subcellular location is the cell membrane. Functionally, receptor for ATP and UTP coupled to G-proteins that activate a phosphatidylinositol-calcium second messenger system. The affinity range is UTP = ATP &gt; ATP-gamma-S &gt;&gt; 2-methylthio-ATP = ADP. In Mus musculus (Mouse), this protein is P2Y purinoceptor 2 (P2ry2).